Reading from the N-terminus, the 529-residue chain is Peptide chain release factor 3 (529 aa).

The tr-type G domain maps to 11–280 (AKRRTFAIIS…GLVEWAPAPM (270 aa)). GTP contacts are provided by residues 20 to 27 (SHPDAGKT), 88 to 92 (DTPGH), and 142 to 145 (NKLD).

Belongs to the TRAFAC class translation factor GTPase superfamily. Classic translation factor GTPase family. PrfC subfamily.

The protein localises to the cytoplasm. Increases the formation of ribosomal termination complexes and stimulates activities of RF-1 and RF-2. It binds guanine nucleotides and has strong preference for UGA stop codons. It may interact directly with the ribosome. The stimulation of RF-1 and RF-2 is significantly reduced by GTP and GDP, but not by GMP. This is Peptide chain release factor 3 from Citrobacter koseri (strain ATCC BAA-895 / CDC 4225-83 / SGSC4696).